Here is a 448-residue protein sequence, read N- to C-terminus: Alpha-2B adrenergic receptor (448 aa).

The Extracellular segment spans residues 1–12 (MDHQEPYSVQAT). The helical transmembrane segment at 13–38 (AAIAAVITFLILFTIFGNALVILAVL) threads the bilayer. Topologically, residues 39–49 (TSRSLPAPQNL) are cytoplasmic. A helical transmembrane segment spans residues 50–75 (FLVSLAAADILVATLIIPFSLANELL). Over 76–85 (GYWYFWRTWC) the chain is Extracellular. C85 and C163 form a disulfide bridge. Residues 86 to 108 (EVYLALDVLFCTSSIVHLCAISL) traverse the membrane as a helical segment. Residues 109–130 (DRYWAVSRALEYNSKRTPRRIK) lie on the Cytoplasmic side of the membrane. Residues 131–153 (CIILTVWLIAAVISLPPLIYKGD) form a helical membrane-spanning segment. The Extracellular portion of the chain corresponds to 154-168 (QGPSPRGPQCKINQE). The helical transmembrane segment at 169–192 (AWYILASSIGSFFAPCLIMILVYL) threads the bilayer. Over 193-370 (RIYLIAKRSH…MTREKRFTFV (178 aa)) the chain is Cytoplasmic. The tract at residues 203 to 326 (RRGPRAKGGP…PASMCSPSLQ (124 aa)) is disordered. The span at 293-309 (AEEEAEEEEEEEGDECE) shows a compositional bias: acidic residues. Residues 371 to 394 (LAVVIGVFVLCWFPFFFTYSLGAI) form a helical membrane-spanning segment. The Extracellular segment spans residues 395-403 (CPQHCKVPH). The chain crosses the membrane as a helical span at residues 404–427 (GLFQFFFWIGYCNSSLNPVIYTIF). The Cytoplasmic segment spans residues 428–448 (NQDFRRAFRRILCRQWTQTAW). C440 is lipidated: S-palmitoyl cysteine.

It belongs to the G-protein coupled receptor 1 family. Adrenergic receptor subfamily. ADRA2B sub-subfamily. In terms of assembly, interacts with RAB26. Interacts with PPP1R9B.

It localises to the cell membrane. Its function is as follows. Alpha-2 adrenergic receptors mediate the catecholamine-induced inhibition of adenylate cyclase through the action of G proteins. The chain is Alpha-2B adrenergic receptor (ADRA2B) from Cavia porcellus (Guinea pig).